Reading from the N-terminus, the 20-residue chain is Hemoglobinase-like protein 1 (20 aa).

This sequence belongs to the peptidase C13 family.

The enzyme catalyses Hydrolysis of proteins and small molecule substrates at -Asn-|-Xaa- bonds.. This chain is Hemoglobinase-like protein 1, found in Fasciola hepatica (Liver fluke).